The chain runs to 329 residues: Probable cell division protein WhiA (329 aa).

A DNA-binding region (H-T-H motif) is located at residues 275–308; it reads SLEELGALADPPLTKDAVAGRIRRLLAMADKRAQ.

It belongs to the WhiA family.

Functionally, involved in cell division and chromosome segregation. This is Probable cell division protein WhiA from Streptomyces griseus subsp. griseus (strain JCM 4626 / CBS 651.72 / NBRC 13350 / KCC S-0626 / ISP 5235).